The sequence spans 196 residues: Holliday junction branch migration complex subunit RuvA (196 aa).

The domain I stretch occupies residues 1–63 (MIASVRGEVL…EDSMTLYGFP (63 aa)). Residues 64–138 (DGETRDLFLT…DKVGVAATGG (75 aa)) are domain II. Positions 138–142 (GALST) are flexible linker. The segment at 143 to 196 (NGHAVRSPVVEALVGLGFAAKQAEEATDTVLAANHDATTSSALRSALSLLGKAR) is domain III.

It belongs to the RuvA family. In terms of assembly, homotetramer. Forms an RuvA(8)-RuvB(12)-Holliday junction (HJ) complex. HJ DNA is sandwiched between 2 RuvA tetramers; dsDNA enters through RuvA and exits via RuvB. An RuvB hexamer assembles on each DNA strand where it exits the tetramer. Each RuvB hexamer is contacted by two RuvA subunits (via domain III) on 2 adjacent RuvB subunits; this complex drives branch migration. In the full resolvosome a probable DNA-RuvA(4)-RuvB(12)-RuvC(2) complex forms which resolves the HJ.

The protein resides in the cytoplasm. In terms of biological role, the RuvA-RuvB-RuvC complex processes Holliday junction (HJ) DNA during genetic recombination and DNA repair, while the RuvA-RuvB complex plays an important role in the rescue of blocked DNA replication forks via replication fork reversal (RFR). RuvA specifically binds to HJ cruciform DNA, conferring on it an open structure. The RuvB hexamer acts as an ATP-dependent pump, pulling dsDNA into and through the RuvAB complex. HJ branch migration allows RuvC to scan DNA until it finds its consensus sequence, where it cleaves and resolves the cruciform DNA. This Mycobacterium bovis (strain ATCC BAA-935 / AF2122/97) protein is Holliday junction branch migration complex subunit RuvA.